The sequence spans 329 residues: 3-isopropylmalate dehydrogenase (329 aa).

Positions 83, 93, 114, and 200 each coordinate substrate. Asp-200, Asp-224, and Asp-228 together coordinate Mg(2+). 257 to 269 (GSAPQIAGKNIAN) provides a ligand contact to NAD(+).

It belongs to the isocitrate and isopropylmalate dehydrogenases family. In terms of assembly, homotetramer. Requires Mg(2+) as cofactor. It depends on Mn(2+) as a cofactor.

Its subcellular location is the cytoplasm. The enzyme catalyses (2R,3S)-3-isopropylmalate + NAD(+) = 4-methyl-2-oxopentanoate + CO2 + NADH. It functions in the pathway amino-acid biosynthesis; L-leucine biosynthesis; L-leucine from 3-methyl-2-oxobutanoate: step 3/4. Functionally, catalyzes the oxidation of 3-carboxy-2-hydroxy-4-methylpentanoate (3-isopropylmalate) to 3-carboxy-4-methyl-2-oxopentanoate. The product decarboxylates to 4-methyl-2 oxopentanoate. In Methanothermobacter thermautotrophicus (strain ATCC 29096 / DSM 1053 / JCM 10044 / NBRC 100330 / Delta H) (Methanobacterium thermoautotrophicum), this protein is 3-isopropylmalate dehydrogenase (leuB).